Here is a 217-residue protein sequence, read N- to C-terminus: Histone H1-gamma, late (217 aa).

2 disordered regions span residues 1–21 and 80–217; these read MSAA…HPPS and GKGA…PAKK. Residues 17-91 form the H15 domain; that stretch reads AHPPSSQMVV…GASGSFKLGK (75 aa). The segment covering 104-113 has biased composition (basic residues); sequence IAAKKAKLAA. The segment covering 114-123 has biased composition (basic and acidic residues); sequence KKKEQREKKA. Basic residues predominate over residues 124-217; it reads LKTKARKEKV…AKKAAKPAKK (94 aa).

The protein belongs to the histone H1/H5 family.

The protein resides in the nucleus. The protein localises to the chromosome. Functionally, histones H1 are necessary for the condensation of nucleosome chains into higher-order structures. The polypeptide is Histone H1-gamma, late (Strongylocentrotus purpuratus (Purple sea urchin)).